A 129-amino-acid polypeptide reads, in one-letter code: Ribosome-binding factor A (129 aa).

It belongs to the RbfA family. In terms of assembly, monomer. Binds 30S ribosomal subunits, but not 50S ribosomal subunits or 70S ribosomes.

The protein localises to the cytoplasm. One of several proteins that assist in the late maturation steps of the functional core of the 30S ribosomal subunit. Associates with free 30S ribosomal subunits (but not with 30S subunits that are part of 70S ribosomes or polysomes). Required for efficient processing of 16S rRNA. May interact with the 5'-terminal helix region of 16S rRNA. This Azotobacter vinelandii (strain DJ / ATCC BAA-1303) protein is Ribosome-binding factor A.